Reading from the N-terminus, the 206-residue chain is Urease accessory protein UreE (206 aa).

Positions 136 to 206 (PEGGAYAEPS…HGHAHAHDRK (71 aa)) are disordered. Basic and acidic residues-rich tracts occupy residues 148 to 169 (QGHD…GGHE) and 177 to 191 (HGHA…EHCG). The span at 192-206 (HGHHHHGHAHAHDRK) shows a compositional bias: basic residues.

The protein belongs to the UreE family.

Its subcellular location is the cytoplasm. In terms of biological role, involved in urease metallocenter assembly. Binds nickel. Probably functions as a nickel donor during metallocenter assembly. This is Urease accessory protein UreE from Bradyrhizobium sp. (strain BTAi1 / ATCC BAA-1182).